A 638-amino-acid polypeptide reads, in one-letter code: 1-deoxy-D-xylulose-5-phosphate synthase (638 aa).

Thiamine diphosphate contacts are provided by residues His71 and Ser112–Ala114. A Mg(2+)-binding site is contributed by Asp144. Thiamine diphosphate contacts are provided by residues Gly145–Ala146, Asn173, Tyr284, and Glu365. Asn173 serves as a coordination point for Mg(2+).

Belongs to the transketolase family. DXPS subfamily. As to quaternary structure, homodimer. It depends on Mg(2+) as a cofactor. Thiamine diphosphate is required as a cofactor.

It catalyses the reaction D-glyceraldehyde 3-phosphate + pyruvate + H(+) = 1-deoxy-D-xylulose 5-phosphate + CO2. It participates in metabolic intermediate biosynthesis; 1-deoxy-D-xylulose 5-phosphate biosynthesis; 1-deoxy-D-xylulose 5-phosphate from D-glyceraldehyde 3-phosphate and pyruvate: step 1/1. Functionally, catalyzes the acyloin condensation reaction between C atoms 2 and 3 of pyruvate and glyceraldehyde 3-phosphate to yield 1-deoxy-D-xylulose-5-phosphate (DXP). The sequence is that of 1-deoxy-D-xylulose-5-phosphate synthase from Mycobacterium sp. (strain KMS).